Here is a 449-residue protein sequence, read N- to C-terminus: NADH-quinone oxidoreductase subunit D (449 aa).

The protein belongs to the complex I 49 kDa subunit family. As to quaternary structure, NDH-1 is composed of 14 different subunits. Subunits NuoB, C, D, E, F, and G constitute the peripheral sector of the complex.

The protein localises to the cell membrane. It carries out the reaction a quinone + NADH + 5 H(+)(in) = a quinol + NAD(+) + 4 H(+)(out). NDH-1 shuttles electrons from NADH, via FMN and iron-sulfur (Fe-S) centers, to quinones in the respiratory chain. The immediate electron acceptor for the enzyme in this species is believed to be a menaquinone. Couples the redox reaction to proton translocation (for every two electrons transferred, four hydrogen ions are translocated across the cytoplasmic membrane), and thus conserves the redox energy in a proton gradient. In Saccharopolyspora erythraea (strain ATCC 11635 / DSM 40517 / JCM 4748 / NBRC 13426 / NCIMB 8594 / NRRL 2338), this protein is NADH-quinone oxidoreductase subunit D.